The sequence spans 131 residues: Protein DfrA (131 aa).

It belongs to the RutC family.

The protein is Protein DfrA (dfrA) of Myxococcus xanthus.